We begin with the raw amino-acid sequence, 276 residues long: Pantothenate synthetase (276 aa).

Position 27–34 (27–34) interacts with ATP; it reads MGALHRGH. H34 (proton donor) is an active-site residue. Q58 lines the (R)-pantoate pocket. Q58 serves as a coordination point for beta-alanine. 147–150 provides a ligand contact to ATP; it reads GKKD. Q153 is a (R)-pantoate binding site. ATP is bound by residues V176 and 184–187; that span reads LSSR.

It belongs to the pantothenate synthetase family. Homodimer.

The protein localises to the cytoplasm. The catalysed reaction is (R)-pantoate + beta-alanine + ATP = (R)-pantothenate + AMP + diphosphate + H(+). The protein operates within cofactor biosynthesis; (R)-pantothenate biosynthesis; (R)-pantothenate from (R)-pantoate and beta-alanine: step 1/1. Catalyzes the condensation of pantoate with beta-alanine in an ATP-dependent reaction via a pantoyl-adenylate intermediate. The polypeptide is Pantothenate synthetase (Helicobacter pylori (strain G27)).